Here is a 527-residue protein sequence, read N- to C-terminus: EGF domain-specific O-linked N-acetylglucosamine transferase (527 aa).

Positions 1-19 are cleaved as a signal peptide; sequence MLMLLVFGVLLHEVPLSGQ. The Required for optimal activity signature appears at 295 to 297; sequence DYD. An N-linked (GlcNAc...) asparagine glycan is attached at N354. The short motif at 524–527 is the Prevents secretion from ER element; it reads HDEL.

Belongs to the glycosyltransferase 61 family. Widely expressed. Expressed in brain, heart, kidney, lung, skeletal muscles and thymus. Highest expression is observed in lung and the lowest in skeletal muscles.

It is found in the endoplasmic reticulum lumen. The catalysed reaction is L-seryl-[protein] + UDP-N-acetyl-alpha-D-glucosamine = 3-O-(N-acetyl-beta-D-glucosaminyl)-L-seryl-[protein] + UDP + H(+). It catalyses the reaction L-threonyl-[protein] + UDP-N-acetyl-alpha-D-glucosamine = 3-O-(N-acetyl-beta-D-glucosaminyl)-L-threonyl-[protein] + UDP + H(+). Functionally, catalyzes the transfer of a single N-acetylglucosamine from UDP-GlcNAc to a serine or threonine residue in extracellular proteins resulting in their modification with a beta-linked N-acetylglucosamine (O-GlcNAc). Specifically glycosylates the Thr residue located between the fifth and sixth conserved cysteines of folded EGF-like domains. The protein is EGF domain-specific O-linked N-acetylglucosamine transferase (Eogt) of Mus musculus (Mouse).